The following is a 217-amino-acid chain: 3,4-dihydroxy-2-butanone 4-phosphate synthase (217 aa).

D-ribulose 5-phosphate contacts are provided by residues 37–38, Asp-42, 150–154, and Glu-174; these read RE and RRGHT. Glu-38 contacts Mg(2+). A Mg(2+)-binding site is contributed by His-153.

The protein belongs to the DHBP synthase family. Homodimer. Mg(2+) is required as a cofactor. Mn(2+) serves as cofactor.

The catalysed reaction is D-ribulose 5-phosphate = (2S)-2-hydroxy-3-oxobutyl phosphate + formate + H(+). It functions in the pathway cofactor biosynthesis; riboflavin biosynthesis; 2-hydroxy-3-oxobutyl phosphate from D-ribulose 5-phosphate: step 1/1. In terms of biological role, catalyzes the conversion of D-ribulose 5-phosphate to formate and 3,4-dihydroxy-2-butanone 4-phosphate. The polypeptide is 3,4-dihydroxy-2-butanone 4-phosphate synthase (Yersinia enterocolitica serotype O:8 / biotype 1B (strain NCTC 13174 / 8081)).